The primary structure comprises 278 residues: Putative phosphoenolpyruvate synthase regulatory protein (278 aa).

ADP is bound at residue 157–164 (GVSRSGKT).

The protein belongs to the pyruvate, phosphate/water dikinase regulatory protein family. PSRP subfamily.

It carries out the reaction [pyruvate, water dikinase] + ADP = [pyruvate, water dikinase]-phosphate + AMP + H(+). The catalysed reaction is [pyruvate, water dikinase]-phosphate + phosphate + H(+) = [pyruvate, water dikinase] + diphosphate. Bifunctional serine/threonine kinase and phosphorylase involved in the regulation of the phosphoenolpyruvate synthase (PEPS) by catalyzing its phosphorylation/dephosphorylation. This is Putative phosphoenolpyruvate synthase regulatory protein from Vibrio parahaemolyticus serotype O3:K6 (strain RIMD 2210633).